A 372-amino-acid chain; its full sequence is MGVDMGELRGAHVPVLLERCLELLAPALGRAGRTVYVDATLGLGGHAEAVLATHPQTMLVGLDRDTEALAHARVRLARFADRVHLEHAVYDELPDVLDRLGHPVVDGILFDLGVSSLQLDAPDRGFAYAQDAPLDMRMDQTRGLTAEEVVNTYPHPDLARVLRVYGEEKFAPRIASAIVRERERDPITSSARLAELVRQTIPAPARRTGGHPAKRTFQALRIEVNRELAALETALPAALDRLTIEGRLVVLSYHSLEDRLTKVALADRVRSKGPVDLPVELPGTGPTFRLLSRGAELPGEAEVAMNPRAASVRLRAAERLDPTAEQRRRTDRERYRRRVRAMHQPGTGSAVRRPTPGDDGTGTDEEGEGHDS.

S-adenosyl-L-methionine contacts are provided by residues 44-46 (GGH), aspartate 63, leucine 97, aspartate 111, and glutamine 118. Basic and acidic residues predominate over residues 315–334 (RAAERLDPTAEQRRRTDRER). Residues 315–372 (RAAERLDPTAEQRRRTDRERYRRRVRAMHQPGTGSAVRRPTPGDDGTGTDEEGEGHDS) form a disordered region. Over residues 361-372 (TGTDEEGEGHDS) the composition is skewed to acidic residues.

This sequence belongs to the methyltransferase superfamily. RsmH family.

The protein resides in the cytoplasm. The enzyme catalyses cytidine(1402) in 16S rRNA + S-adenosyl-L-methionine = N(4)-methylcytidine(1402) in 16S rRNA + S-adenosyl-L-homocysteine + H(+). Its function is as follows. Specifically methylates the N4 position of cytidine in position 1402 (C1402) of 16S rRNA. The chain is Ribosomal RNA small subunit methyltransferase H from Salinispora arenicola (strain CNS-205).